The sequence spans 181 residues: MSFVPSKVFFTKGVGRHKEYLSSFELALRDAKIEKCNLVTVSSIFPPKCERVSVEEGVKMLTPGQITFAVMARNSTNEYNRLIAASIGVAIPADDTQYGYLSEHHPFGEDAEQSGEYAEDLAATMLATTLGIEFDPNKDWDEREGIYKMSGKIINSYNITQSAEGENGMWTTVISCAVLLP.

A Pyruvic acid (Ser) modification is found at serine 43.

Belongs to the PdaD family. Requires pyruvate as cofactor.

The catalysed reaction is L-arginine + H(+) = agmatine + CO2. In Chlorobium luteolum (strain DSM 273 / BCRC 81028 / 2530) (Pelodictyon luteolum), this protein is Probable pyruvoyl-dependent arginine decarboxylase.